Here is a 141-residue protein sequence, read N- to C-terminus: Hemoglobin subunit alpha-A (141 aa).

A Globin domain is found at 1–141 (VLSSHDKSNV…VGTVLTAKYR (141 aa)). O2 is bound at residue His58. A heme b-binding site is contributed by His87.

It belongs to the globin family. Heterotetramer of two alpha chains and two beta chains. Red blood cells.

In terms of biological role, involved in oxygen transport from the lung to the various peripheral tissues. The protein is Hemoglobin subunit alpha-A (HBAA) of Phoenicopterus ruber (American flamingo).